Consider the following 371-residue polypeptide: GTPase Obg (371 aa).

Residues 1-159 (MKFLDQAKVY…KTIWLRLKLI (159 aa)) enclose the Obg domain. Residues 160 to 327 (ADAGLVGLPN…VLRALRDIIV (168 aa)) form the OBG-type G domain. Residues 166–173 (GLPNAGKS), 191–195 (FTTLH), 212–215 (DIPG), 279–282 (SQID), and 308–310 (SAI) each bind GTP. Positions 173 and 193 each coordinate Mg(2+). The disordered stretch occupies residues 337-371 (APMKALKVRHRDMQSSGNEGESEDNSDRDDEEQQG). The span at 356 to 371 (GESEDNSDRDDEEQQG) shows a compositional bias: acidic residues.

It belongs to the TRAFAC class OBG-HflX-like GTPase superfamily. OBG GTPase family. As to quaternary structure, monomer. Mg(2+) serves as cofactor.

It localises to the cytoplasm. Its function is as follows. An essential GTPase which binds GTP, GDP and possibly (p)ppGpp with moderate affinity, with high nucleotide exchange rates and a fairly low GTP hydrolysis rate. Plays a role in control of the cell cycle, stress response, ribosome biogenesis and in those bacteria that undergo differentiation, in morphogenesis control. This chain is GTPase Obg, found in Rhizobium rhizogenes (strain K84 / ATCC BAA-868) (Agrobacterium radiobacter).